A 432-amino-acid polypeptide reads, in one-letter code: Enolase (432 aa).

Residue Q167 participates in (2R)-2-phosphoglycerate binding. E209 functions as the Proton donor in the catalytic mechanism. Positions 246, 290, and 317 each coordinate Mg(2+). K342, R371, S372, and K393 together coordinate (2R)-2-phosphoglycerate. K342 functions as the Proton acceptor in the catalytic mechanism.

This sequence belongs to the enolase family. In terms of assembly, component of the RNA degradosome, a multiprotein complex involved in RNA processing and mRNA degradation. Requires Mg(2+) as cofactor.

Its subcellular location is the cytoplasm. It localises to the secreted. The protein resides in the cell surface. It carries out the reaction (2R)-2-phosphoglycerate = phosphoenolpyruvate + H2O. The protein operates within carbohydrate degradation; glycolysis; pyruvate from D-glyceraldehyde 3-phosphate: step 4/5. Catalyzes the reversible conversion of 2-phosphoglycerate (2-PG) into phosphoenolpyruvate (PEP). It is essential for the degradation of carbohydrates via glycolysis. This Klebsiella pneumoniae (strain 342) protein is Enolase.